Consider the following 154-residue polypeptide: Cyanate hydratase (154 aa).

Catalysis depends on residues R100, E103, and S126.

The protein belongs to the cyanase family.

The catalysed reaction is cyanate + hydrogencarbonate + 3 H(+) = NH4(+) + 2 CO2. Its function is as follows. Catalyzes the reaction of cyanate with bicarbonate to produce ammonia and carbon dioxide. In Aspergillus fumigatus (strain ATCC MYA-4609 / CBS 101355 / FGSC A1100 / Af293) (Neosartorya fumigata), this protein is Cyanate hydratase.